Reading from the N-terminus, the 98-residue chain is MRRMRSGFKHCAIPIDICRWEYILSPLILQDLQGPQQGGSVAVDVTVRCSVRFVHLPHYGGFNHGTVQRRVDPDDCRILRQLHIVLSLRLCLIDRDRL.

This is an uncharacterized protein from Frog virus 3 (isolate Goorha) (FV-3).